The primary structure comprises 253 residues: E3 ubiquitin-protein ligase MARCHF3 (253 aa).

The segment at 63-123 adopts an RING-CH-type zinc-finger fold; it reads SPFNDRPMCR…ELCHFRFAVE (61 aa). 8 residues coordinate Zn(2+): cysteine 71, cysteine 74, cysteine 87, cysteine 89, histidine 97, cysteine 100, cysteine 113, and cysteine 116. 2 helical membrane-spanning segments follow: residues 145-165 and 182-202; these read LFGD…SGWL and AVGL…WTLV. Serine 237 and serine 243 each carry phosphoserine.

In terms of assembly, interacts with MARCHF2 and STX6.

Its subcellular location is the cytoplasmic vesicle membrane. It localises to the early endosome membrane. The enzyme catalyses S-ubiquitinyl-[E2 ubiquitin-conjugating enzyme]-L-cysteine + [acceptor protein]-L-lysine = [E2 ubiquitin-conjugating enzyme]-L-cysteine + N(6)-ubiquitinyl-[acceptor protein]-L-lysine.. The protein operates within protein modification; protein ubiquitination. In terms of biological role, E3 ubiquitin-protein ligase which may be involved in endosomal trafficking. E3 ubiquitin ligases accept ubiquitin from an E2 ubiquitin-conjugating enzyme in the form of a thioester and then directly transfer the ubiquitin to targeted substrates. The sequence is that of E3 ubiquitin-protein ligase MARCHF3 from Homo sapiens (Human).